Consider the following 95-residue polypeptide: Large ribosomal subunit protein bL25 (95 aa).

This sequence belongs to the bacterial ribosomal protein bL25 family. In terms of assembly, part of the 50S ribosomal subunit; part of the 5S rRNA/L5/L18/L25 subcomplex. Contacts the 5S rRNA. Binds to the 5S rRNA independently of L5 and L18.

This is one of the proteins that binds to the 5S RNA in the ribosome where it forms part of the central protuberance. The sequence is that of Large ribosomal subunit protein bL25 from Shewanella halifaxensis (strain HAW-EB4).